The primary structure comprises 237 residues: Small ribosomal subunit protein uS3 (237 aa).

The KH type-2 domain occupies 39-107 (IRAYLMEELK…ETHLNIVEVR (69 aa)). The tract at residues 213–237 (MASERRATESDNQGGGGRDRRRENA) is disordered.

The protein belongs to the universal ribosomal protein uS3 family. In terms of assembly, part of the 30S ribosomal subunit. Forms a tight complex with proteins S10 and S14.

Binds the lower part of the 30S subunit head. Binds mRNA in the 70S ribosome, positioning it for translation. This is Small ribosomal subunit protein uS3 from Sinorhizobium fredii (strain NBRC 101917 / NGR234).